The following is a 369-amino-acid chain: MSGNTLGTLFTVTTFGESHGPAIGCVIDGCPPGMALTEADVQLELDRRKPGTSRHVTQRQEPDQVEILSGVFEGVTTGAPIALLIRNTDQRSKDYGNIVETFRPGHADYTYWQKYGVRDYRGGGRSSARLTAPVVGAGAIAKKWLRERFGVEVRGYMSALGEIEIPFVDWSHVRENPFFAPNADIVPQLEGYMDALRKDGDSIGARIDVVASGVPVGWGEPLFDRLDADIAHAMMGINAVKGVEIGAGFASVAQRGSVHGDELTPDGFVGNHAGGVLGGISTGQDITVSIAIKPTSSIRTPRRSITKAGEPAVIETFGRHDPCVGIRATPIAESMLALVLIDHALRHRAQCGDVSTATPKIAARAPQAQ.

NADP(+) is bound by residues Arg-48 and Arg-54. Residues 125 to 127 (RSS), 238 to 239 (NA), Gly-278, 293 to 297 (KPTSS), and Arg-319 each bind FMN.

The protein belongs to the chorismate synthase family. As to quaternary structure, homotetramer. Requires FMNH2 as cofactor.

The catalysed reaction is 5-O-(1-carboxyvinyl)-3-phosphoshikimate = chorismate + phosphate. Its pathway is metabolic intermediate biosynthesis; chorismate biosynthesis; chorismate from D-erythrose 4-phosphate and phosphoenolpyruvate: step 7/7. Functionally, catalyzes the anti-1,4-elimination of the C-3 phosphate and the C-6 proR hydrogen from 5-enolpyruvylshikimate-3-phosphate (EPSP) to yield chorismate, which is the branch point compound that serves as the starting substrate for the three terminal pathways of aromatic amino acid biosynthesis. This reaction introduces a second double bond into the aromatic ring system. This Burkholderia thailandensis (strain ATCC 700388 / DSM 13276 / CCUG 48851 / CIP 106301 / E264) protein is Chorismate synthase.